A 230-amino-acid chain; its full sequence is 8-demethylnovobiocic acid C(8)-methyltransferase (230 aa).

Belongs to the methyltransferase superfamily.

It carries out the reaction 8-desmethylnovobiocic acid + S-adenosyl-L-methionine = novobiocic acid + S-adenosyl-L-homocysteine + H(+). It participates in antibiotic biosynthesis; novobiocin biosynthesis. In terms of biological role, C-methyltransferase that methylates 8-demethylnovobiocic acid to produce novobiocic acid in the novobiocin biosynthesis pathway. Novobiocin is an aminocoumarin family antibiotic that targets bacterial DNA gyrases. The chain is 8-demethylnovobiocic acid C(8)-methyltransferase (novO) from Streptomyces niveus (Streptomyces spheroides).